Reading from the N-terminus, the 171-residue chain is 3-hydroxydecanoyl-[acyl-carrier-protein] dehydratase (171 aa).

Residue histidine 70 is part of the active site.

It belongs to the thioester dehydratase family. FabA subfamily. As to quaternary structure, homodimer.

It is found in the cytoplasm. The enzyme catalyses a (3R)-hydroxyacyl-[ACP] = a (2E)-enoyl-[ACP] + H2O. It catalyses the reaction (3R)-hydroxydecanoyl-[ACP] = (2E)-decenoyl-[ACP] + H2O. It carries out the reaction (2E)-decenoyl-[ACP] = (3Z)-decenoyl-[ACP]. Its pathway is lipid metabolism; fatty acid biosynthesis. Necessary for the introduction of cis unsaturation into fatty acids. Catalyzes the dehydration of (3R)-3-hydroxydecanoyl-ACP to E-(2)-decenoyl-ACP and then its isomerization to Z-(3)-decenoyl-ACP. Can catalyze the dehydratase reaction for beta-hydroxyacyl-ACPs with saturated chain lengths up to 16:0, being most active on intermediate chain length. This is 3-hydroxydecanoyl-[acyl-carrier-protein] dehydratase from Photobacterium profundum (strain SS9).